The chain runs to 178 residues: Alkyl hydroperoxide reductase AhpD (178 aa).

Cys-130 serves as the catalytic Proton donor. Cysteines 130 and 133 form a disulfide. The Cysteine sulfenic acid (-SOH) intermediate role is filled by Cys-133.

This sequence belongs to the AhpD family. In terms of assembly, homotrimer.

It catalyses the reaction N(6)-[(R)-dihydrolipoyl]-L-lysyl-[lipoyl-carrier protein] + a hydroperoxide = N(6)-[(R)-lipoyl]-L-lysyl-[lipoyl-carrier protein] + an alcohol + H2O. Functionally, antioxidant protein with alkyl hydroperoxidase activity. Required for the reduction of the AhpC active site cysteine residues and for the regeneration of the AhpC enzyme activity. This chain is Alkyl hydroperoxide reductase AhpD, found in Mycolicibacterium paratuberculosis (strain ATCC BAA-968 / K-10) (Mycobacterium paratuberculosis).